Reading from the N-terminus, the 319-residue chain is uncharacterized protein (319 aa).

The MPN domain occupies 29-164 (VNISSLALLK…LDAFRSVNPL (136 aa)). Zn(2+) is bound by residues H111, H113, and D124. Positions 111-124 (HSHPGFGCWLSSVD) match the JAMM motif motif.

It belongs to the peptidase M67A family.

This is an uncharacterized protein from Caenorhabditis elegans.